Consider the following 1216-residue polypeptide: 1-phosphatidylinositol 4,5-bisphosphate phosphodiesterase beta-1 (1216 aa).

Cys-17 carries S-palmitoyl cysteine lipidation. Phosphoserine is present on Ser-236. The PI-PLC X-box domain occupies 316 to 467; it reads EDMSQPLSHY…LMYKILVKNK (152 aa). Active-site residues include His-331 and His-378. Ser-417 is modified (phosphoserine). The disordered stretch occupies residues 469–534; sequence KSHKSSEGSG…MDEGTAGSEA (66 aa). Residues 472–483 show a composition bias toward basic and acidic residues; the sequence is KSSEGSGKKKLS. A compositionally biased stretch (low complexity) spans 491 to 501; that stretch reads SDSSSVFEPSS. Residues 507-518 show a composition bias toward acidic residues; it reads ADTESDDDDDDD. The residue at position 509 (Thr-509) is a Phosphothreonine. 2 positions are modified to phosphoserine: Ser-511 and Ser-582. Positions 540–656 constitute a PI-PLC Y-box domain; that stretch reads MSNLVNYIQP…GYRLKPEFMR (117 aa). Residues 656–786 enclose the C2 domain; it reads RRPDKHFDPF…RNERNQPLTL (131 aa). Disordered stretches follow at residues 834–891, 967–989, 1072–1095, and 1173–1216; these read DEEE…VKAP, EKSA…GSSA, MDKK…EEEK, and ISED…DTPL. The span at 846-868 shows a compositional bias: polar residues; the sequence is ETSSEAPSETRTTPAENGVNHTA. Residue Ser-887 is modified to Phosphoserine; by PKC. Residues 967-979 are compositionally biased toward basic and acidic residues; the sequence is EKSAKKDSKKKSE. Phosphoserine occurs at positions 978 and 987. Positions 1075–1095 are enriched in basic and acidic residues; the sequence is KRQEKITEAKSKDKSQMEEEK. Phosphoserine is present on residues Ser-1197, Ser-1199, and Ser-1200. A compositionally biased stretch (basic and acidic residues) spans 1205-1216; it reads RENPGREFDTPL.

As to quaternary structure, interacts with DGKQ. It depends on Ca(2+) as a cofactor. Post-translationally, palmitoylated. Palmitoylation at Cys-17 by ZDHHC21 regulates the signaling activity of PLCB1 and the function of the endothelial barrier. Palmitoylation by ZDHHC21 is stimulated by inflammation.

It localises to the nucleus membrane. The protein resides in the cytoplasm. It carries out the reaction a 1,2-diacyl-sn-glycero-3-phospho-(1D-myo-inositol-4,5-bisphosphate) + H2O = 1D-myo-inositol 1,4,5-trisphosphate + a 1,2-diacyl-sn-glycerol + H(+). The catalysed reaction is a 1,2-diacyl-sn-glycero-3-phospho-(1D-myo-inositol) + H2O = 1D-myo-inositol 1-phosphate + a 1,2-diacyl-sn-glycerol + H(+). Functionally, catalyzes the hydrolysis of 1-phosphatidylinositol 4,5-bisphosphate into diacylglycerol (DAG) and inositol 1,4,5-trisphosphate (IP3) and mediates intracellular signaling downstream of G protein-coupled receptors. Regulates the function of the endothelial barrier. The chain is 1-phosphatidylinositol 4,5-bisphosphate phosphodiesterase beta-1 from Mus musculus (Mouse).